The chain runs to 466 residues: cGMP-specific 3',5'-cGMP phosphodiesterase 3 (466 aa).

Over residues 1–120 (MAPQQNIMKQ…NSNNNNSNNN (120 aa)) the composition is skewed to low complexity. The interval 1-150 (MAPQQNIMKQ…NNNKIRGYND (150 aa)) is disordered. A compositionally biased stretch (acidic residues) spans 123–134 (DDEEEEGDDEDN). Residues 135–150 (NNNNNSNNNKIRGYND) are compositionally biased toward low complexity. One can recognise a PDEase domain in the interval 137–458 (NNNSNNNKIR…EIWSNNGSSS (322 aa)). His213 (proton donor) is an active-site residue. A divalent metal cation-binding residues include His217, His253, Asp254, and Asp364.

Belongs to the cyclic nucleotide phosphodiesterase family. A divalent metal cation is required as a cofactor.

The protein resides in the cytoplasm. Its subcellular location is the cytosol. The enzyme catalyses 3',5'-cyclic GMP + H2O = GMP + H(+). Its activity is regulated as follows. Inhibited by 3-isobutyl-1-methylxanthine (IBMX). Phosphodiesterase specific for cGMP, which is not activated by cGMP. Involved in the degradation of intracellular cGMP. The sequence is that of cGMP-specific 3',5'-cGMP phosphodiesterase 3 (pde3) from Dictyostelium discoideum (Social amoeba).